The sequence spans 398 residues: Galactose-3-O-sulfotransferase 2 (398 aa).

At 1 to 10 (MMSMLGGLQR) the chain is on the cytoplasmic side. Residues 11 to 31 (YFRVILLLLLALTLLLLAGFL) form a helical; Signal-anchor for type II membrane protein membrane-spanning segment. The Lumenal segment spans residues 32-398 (HSDLELDTPL…PLKNIPFLGA (367 aa)). N-linked (GlcNAc...) asparagine glycosylation is found at Asn79, Asn132, Asn179, Asn287, Asn330, and Asn360.

It belongs to the galactose-3-O-sulfotransferase family. In terms of tissue distribution, ubiquitous. Detected in heart, stomach, colon, liver and spleen, in epithelial cells lining the lower to middle layer of the crypts in colonic mucosa, hepatocytes surrounding the central vein of the liver, extravillous cytotrophoblasts in the basal plate of the septum of the placenta, renal tubules of the kidney, and neuronal cells of the cerebral cortex.

Its subcellular location is the golgi apparatus. The protein resides in the golgi stack membrane. The protein operates within protein modification; carbohydrate sulfation. With respect to regulation, strongly inhibited by Cu(2+) and Zn(2+). Transfers a sulfate group to the hydroxyl group at C3 of non-reducing beta-galactosyl residues. Acts both on type 1 (Gal-beta-1,3-GlcNAc) and type 2 (Gal-beta-1,4-GlcNAc) chains with similar efficiency. The chain is Galactose-3-O-sulfotransferase 2 (GAL3ST2) from Homo sapiens (Human).